Consider the following 361-residue polypeptide: L-threonine 3-dehydrogenase (361 aa).

Cysteine 38 contributes to the Zn(2+) binding site. Catalysis depends on charge relay system residues threonine 40 and histidine 43. 6 residues coordinate Zn(2+): histidine 63, glutamate 64, cysteine 93, cysteine 96, cysteine 99, and cysteine 107. NAD(+)-binding positions include isoleucine 175, aspartate 195, arginine 200, 262-264, and 286-287; these read LGI and IY.

It belongs to the zinc-containing alcohol dehydrogenase family. In terms of assembly, homotetramer. Zn(2+) serves as cofactor.

The protein localises to the cytoplasm. The catalysed reaction is L-threonine + NAD(+) = (2S)-2-amino-3-oxobutanoate + NADH + H(+). It functions in the pathway amino-acid degradation; L-threonine degradation via oxydo-reductase pathway; glycine from L-threonine: step 1/2. Functionally, catalyzes the NAD(+)-dependent oxidation of L-threonine to 2-amino-3-ketobutyrate. The protein is L-threonine 3-dehydrogenase of Pectobacterium atrosepticum (strain SCRI 1043 / ATCC BAA-672) (Erwinia carotovora subsp. atroseptica).